Here is a 257-residue protein sequence, read N- to C-terminus: Imidazole glycerol phosphate synthase subunit HisF (257 aa).

Active-site residues include Asp-11 and Asp-130.

Belongs to the HisA/HisF family. In terms of assembly, heterodimer of HisH and HisF.

The protein localises to the cytoplasm. It catalyses the reaction 5-[(5-phospho-1-deoxy-D-ribulos-1-ylimino)methylamino]-1-(5-phospho-beta-D-ribosyl)imidazole-4-carboxamide + L-glutamine = D-erythro-1-(imidazol-4-yl)glycerol 3-phosphate + 5-amino-1-(5-phospho-beta-D-ribosyl)imidazole-4-carboxamide + L-glutamate + H(+). Its pathway is amino-acid biosynthesis; L-histidine biosynthesis; L-histidine from 5-phospho-alpha-D-ribose 1-diphosphate: step 5/9. IGPS catalyzes the conversion of PRFAR and glutamine to IGP, AICAR and glutamate. The HisF subunit catalyzes the cyclization activity that produces IGP and AICAR from PRFAR using the ammonia provided by the HisH subunit. This Psychromonas ingrahamii (strain DSM 17664 / CCUG 51855 / 37) protein is Imidazole glycerol phosphate synthase subunit HisF.